The chain runs to 601 residues: MSKIRTLNRQFISNLETHKAVTDAKRNLILSILKSTTTKREAKNYLTKYQNQFDLPDETPKAGTIYEQSLSRRDNQRELFIKRFLNAQNPFISIYDDEETKLQKIPLRLAIFKIKFPTISLRQWKGIAETFKRLMTLGISPIILLDYDHLSHGSFKKNELYMINQANKMLSILGKPEEQEDLKATILRNSFSVADGQITIDSLELILIPLYQGIIPIIQPIVFNADTTMQEFLKCNTLLNSLCTALVDRRTTDLLSIEKIVMIDPLGGIPSIERKQTSHVFINLSQEYSDIMSELFIGHISPKIRDLHVENLNSMNEILTSIFEKSGNDETTGIITTPEVMSIHNDQLNPIIYNVLTDRSIISSSLPSTNKRTPQLSTTIVKKGVDVQIFDQENNFSGSDFTMDNLIASKKVDKKKLTELLEDSFGKKLIVDEYYERINNRLATFILVGDYDGAAIITWEYSGDKKVAYLDKFAIAKRNQGLPGLADIIFKIILQSHPVELIWRSRKNNPVNKWYFERCCGCMSAPESQWKIFYTGDIFDKRIDRMKDKKKQNNKKKKTATMMMMNNSQKVAGVNADTHVDILKNLEQYSDICEGIVPSFA.

The N-acetyltransferase domain occupies 401 to 558 (FTMDNLIASK…KKKQNNKKKK (158 aa)).

This sequence belongs to the acetyltransferase family.

The protein resides in the mitochondrion. The catalysed reaction is L-glutamate + acetyl-CoA = N-acetyl-L-glutamate + CoA + H(+). It functions in the pathway amino-acid biosynthesis; L-arginine biosynthesis; N(2)-acetyl-L-ornithine from L-glutamate: step 1/4. N-acetylglutamate synthase involved in arginine biosynthesis. This is Amino-acid acetyltransferase, mitochondrial (ARG2) from Lodderomyces elongisporus (strain ATCC 11503 / CBS 2605 / JCM 1781 / NBRC 1676 / NRRL YB-4239) (Yeast).